Consider the following 3390-residue polypeptide: Genome polyprotein (3390 aa).

Residues 1 to 15 (MNNQRKKTGKPSINM) form an interaction with host EXOC1 region. Residues 1–100 (MNNQRKKTGK…MLSIINKRKK (100 aa)) lie on the Cytoplasmic side of the membrane. The hydrophobic; homodimerization of capsid protein C stretch occupies residues 37-72 (LLNGQGPMKLVMAFIAFLRFLAIPPTAGVLARWGTF). Residues 101-114 (TSLCLMMMLPATLA) constitute a propeptide, ER anchor for the capsid protein C, removed in mature form by serine protease NS3. The chain crosses the membrane as a helical span at residues 101 to 118 (TSLCLMMMLPATLAFHLT). Residues 119-243 (SRDGEPRMIV…VEKVETWALR (125 aa)) are Extracellular-facing. An N-linked (GlcNAc...) asparagine; by host glycan is attached at N183. The chain crosses the membrane as a helical span at residues 244–264 (HPGFTILALFLAHYIGTSLTQ). Position 265 (K265) is a topological domain, cytoplasmic. The helical transmembrane segment at 266–280 (VVIFILLMLVTPSMT) threads the bilayer. Over 281–723 (MRCVGVGNRD…VHQIFGSAYT (443 aa)) the chain is Extracellular. Disulfide bonds link C283-C310, C340-C401, C354-C385, and C372-C396. A glycan (N-linked (GlcNAc...) asparagine; by host) is linked at N347. The tract at residues 378-391 (DRGWGNGCGLFGKG) is fusion peptide. N433 carries an N-linked (GlcNAc...) asparagine; by host glycan. Disulfide bonds link C463–C563 and C580–C611. The helical transmembrane segment at 724–744 (ALFSGVSWIMKIGIGVLLTWI) threads the bilayer. The Cytoplasmic portion of the chain corresponds to 745–750 (GLNSKN). A helical transmembrane segment spans residues 751–771 (TSMSFSCIAIGIITLYLGVVV). The Extracellular segment spans residues 772 to 1193 (QADMGCVINW…MIGSNASDRM (422 aa)). Intrachain disulfides connect C777-C788, C828-C916, C952-C996, C1053-C1102, C1064-C1086, and C1085-C1089. N-linked (GlcNAc...) asparagine; by host glycosylation is found at N903 and N980. Residues N1132 and N1188 are each glycosylated (N-linked (GlcNAc...) asparagine; by host). Residues 1194-1218 (GMGVTYLALIATFKIQPFLALGFFL) form a helical membrane-spanning segment. At 1219–1224 (RKLTSR) the chain is on the cytoplasmic side. A helical transmembrane segment spans residues 1225–1243 (ENLLLGVGLAMAATLRLPE). The Lumenal segment spans residues 1244–1267 (DIEQMANGIALGLMALKLITQFET). A helical membrane pass occupies residues 1268–1288 (YQLWTALVSLTCSNTIFTLTV). A1289 is a topological domain (cytoplasmic). The chain crosses the membrane as a helical span at residues 1290-1308 (WRTATLILAGISLLPVCQS). Residues 1309–1315 (SSMRKTD) are Lumenal-facing. Residues 1316–1336 (WLPMTVAAMGVPPLPLFIFSL) traverse the membrane as a helical segment. The Cytoplasmic segment spans residues 1337 to 1344 (KDTLKRRS). Residues 1345-1365 (WPLNEGVMAVGLVSILASSLL) traverse the membrane as a helical segment. At 1366-1368 (RND) the chain is on the lumenal side. The helical transmembrane segment at 1369–1389 (VPMAGPLVAGGLLIACYVITG) threads the bilayer. Residues 1390 to 1443 (TSADLTVEKAADVTWEEEAEQTGVSHNLMITVDDDGTMRIKDDETENILTVLLK) are Cytoplasmic-facing. The interval 1396–1435 (VEKAADVTWEEEAEQTGVSHNLMITVDDDGTMRIKDDETE) is interacts with and activates NS3 protease. An intramembrane region (helical) is located at residues 1444-1464 (TALLIVSGIFPYSIPATMLVW). Residues 1465 to 2146 (HTWQKQTQRS…VEELPETMET (682 aa)) are Cytoplasmic-facing. A Peptidase S7 domain is found at 1474-1651 (SGVLWDVPSP…NAEPDGPTPE (178 aa)). Catalysis depends on charge relay system; for serine protease NS3 activity residues H1524, D1548, and S1608. The Helicase ATP-binding domain maps to 1654–1810 (EEMFKKRNLT…QSNAPIQDEE (157 aa)). Residues 1658–1661 (KKRN) are important for RNA-binding. An ATP-binding site is contributed by 1667 to 1674 (LHPGSGKT). Positions 1758–1761 (DEAH) match the DEAH box motif. In terms of domain architecture, Helicase C-terminal spans 1821–1986 (GNEWITDFVG…GIIPALFEPE (166 aa)). K1862 carries the N6-acetyllysine; by host modification. The helical transmembrane segment at 2147–2167 (LLLLGLMILLTGGAMLFLISG) threads the bilayer. Residues 2168 to 2169 (KG) are Lumenal-facing. Positions 2170–2190 (IGKTSIGLICVIASSGMLWMA) form an intramembrane region, helical. Residue D2191 is a topological domain, lumenal. The helical transmembrane segment at 2192 to 2212 (VPLQWIASAIVLEFFMMVLLI) threads the bilayer. Residues 2213–2227 (PEPEKQRTPQDNQLA) are Cytoplasmic-facing. Residues 2228–2248 (YVVIGILTLAAIVAANEMGLL) traverse the membrane as a helical segment. The Lumenal portion of the chain corresponds to 2249–2273 (ETTKRDLGMSKEPGVVSPTSYLDVD). The segment at residues 2274-2294 (LHPASAWTLYAVATTVITPML) is an intramembrane region (helical). The Lumenal segment spans residues 2295 to 2305 (RHTIENSTANV). N2300 and N2304 each carry an N-linked (GlcNAc...) asparagine; by host glycan. Residues 2306–2326 (SLAAIANQAVVLMGLDKGWPI) constitute an intramembrane region (helical). The Lumenal segment spans residues 2327–2346 (SKMDLGVPLLALGCYSQVNP). A helical transmembrane segment spans residues 2347–2367 (LTLIAAVLLLVTHYAIIGPGL). Residues 2368–2412 (QAKATREAQKRTAAGIMKNPTVDGIMTIDLDPVIYDSKFEKQLGQ) are Cytoplasmic-facing. A helical transmembrane segment spans residues 2413–2433 (VMLLVLCAVQLLLMRTSWALC). At 2434-2458 (EVLTLATGPITTLWEGSPGKFWNTT) the chain is on the lumenal side. The N-linked (GlcNAc...) asparagine; by host glycan is linked to N2456. The helical transmembrane segment at 2459 to 2479 (IAVSMANIFRGSYLAGAGLAL) threads the bilayer. Topologically, residues 2480–3390 (SIMKSVGTGK…KEEESEGAIW (911 aa)) are cytoplasmic. The mRNA cap 0-1 NS5-type MT domain occupies 2492–2753 (TGSQGETLGE…DVDLGAGTRH (262 aa)). S2546 is an S-adenosyl-L-methionine binding site. A Phosphoserine modification is found at S2546. K2551 functions as the For 2'-O-MTase activity in the catalytic mechanism. Positions 2567-2570 (VIDL) match the SUMO-interacting motif motif. The S-adenosyl-L-methionine site is built by G2576, W2577, T2594, K2595, D2621, and V2622. D2636 functions as the For 2'-O-MTase activity in the catalytic mechanism. I2637 contacts S-adenosyl-L-methionine. Residues K2670 and E2706 each act as for 2'-O-MTase activity in the active site. Y2708 lines the S-adenosyl-L-methionine pocket. Zn(2+)-binding residues include E2927, H2931, C2936, and C2939. The RdRp catalytic domain maps to 3018–3168 (AMYADDTAGW…PIDDRFANAL (151 aa)). Zn(2+) is bound by residues H3202, C3218, and C3337.

In the N-terminal section; belongs to the class I-like SAM-binding methyltransferase superfamily. mRNA cap 0-1 NS5-type methyltransferase family. As to quaternary structure, homodimer. Interacts (via N-terminus) with host EXOC1 (via C-terminus); this interaction results in EXOC1 degradation through the proteasome degradation pathway. Forms heterodimers with envelope protein E in the endoplasmic reticulum and Golgi. In terms of assembly, homodimer; in the endoplasmic reticulum and Golgi. Interacts with protein prM. Interacts with non-structural protein 1. As to quaternary structure, homodimer; Homohexamer when secreted. Interacts with envelope protein E. Interacts (via N-terminus) with serine protease NS3. In terms of assembly, forms a heterodimer with serine protease NS3. May form homooligomers. As to quaternary structure, forms a heterodimer with NS2B. Interacts with NS4B. Interacts with unphosphorylated RNA-directed RNA polymerase NS5; this interaction stimulates RNA-directed RNA polymerase NS5 guanylyltransferase activity. Interacts with host SHFL. Interacts with host MAVS; this interaction inhibits the synthesis of IFN-beta. Interacts with host SHFL. Interacts with host AUP1; the interaction occurs in the presence of Dengue virus NS4B and induces lipophagy which facilitates production of virus progeny particles. In terms of assembly, interacts with serine protease NS3. As to quaternary structure, homodimer. Interacts with host STAT2; this interaction inhibits the phosphorylation of the latter, and, when all viral proteins are present (polyprotein), targets STAT2 for degradation. Interacts with serine protease NS3. Post-translationally, specific enzymatic cleavages in vivo yield mature proteins. Cleavages in the lumen of endoplasmic reticulum are performed by host signal peptidase, whereas cleavages in the cytoplasmic side are performed by serine protease NS3. Signal cleavage at the 2K-4B site requires a prior NS3 protease-mediated cleavage at the 4A-2K site. In terms of processing, cleaved in post-Golgi vesicles by a host furin, releasing the mature small envelope protein M, and peptide pr. This cleavage is incomplete as up to 30% of viral particles still carry uncleaved prM. N-glycosylated. Post-translationally, N-glycosylated. The excreted form is glycosylated and this is required for efficient secretion of the protein from infected cells. In terms of processing, acetylated by host KAT5. Acetylation modulates NS3 RNA-binding and unwinding activities and plays an important positive role for viral replication. Sumoylation of RNA-directed RNA polymerase NS5 increases NS5 protein stability allowing proper viral RNA replication. Post-translationally, phosphorylated on serines residues. This phosphorylation may trigger NS5 nuclear localization.

The protein localises to the virion. It localises to the host nucleus. The protein resides in the host cytoplasm. It is found in the host perinuclear region. Its subcellular location is the secreted. The protein localises to the virion membrane. It localises to the host endoplasmic reticulum membrane. The protein resides in the host mitochondrion. The enzyme catalyses Selective hydrolysis of -Xaa-Xaa-|-Yaa- bonds in which each of the Xaa can be either Arg or Lys and Yaa can be either Ser or Ala.. The catalysed reaction is RNA(n) + a ribonucleoside 5'-triphosphate = RNA(n+1) + diphosphate. It carries out the reaction a ribonucleoside 5'-triphosphate + H2O = a ribonucleoside 5'-diphosphate + phosphate + H(+). It catalyses the reaction ATP + H2O = ADP + phosphate + H(+). The enzyme catalyses a 5'-end (5'-triphosphoguanosine)-ribonucleoside in mRNA + S-adenosyl-L-methionine = a 5'-end (N(7)-methyl 5'-triphosphoguanosine)-ribonucleoside in mRNA + S-adenosyl-L-homocysteine. The catalysed reaction is a 5'-end (N(7)-methyl 5'-triphosphoguanosine)-ribonucleoside in mRNA + S-adenosyl-L-methionine = a 5'-end (N(7)-methyl 5'-triphosphoguanosine)-(2'-O-methyl-ribonucleoside) in mRNA + S-adenosyl-L-homocysteine + H(+). Functionally, plays a role in virus budding by binding to the cell membrane and gathering the viral RNA into a nucleocapsid that forms the core of a mature virus particle. During virus entry, may induce genome penetration into the host cytoplasm after hemifusion induced by the surface proteins. Can migrate to the cell nucleus where it modulates host functions. Overcomes the anti-viral effects of host EXOC1 by sequestering and degrading the latter through the proteasome degradation pathway. In terms of biological role, inhibits RNA silencing by interfering with host Dicer. Its function is as follows. Prevents premature fusion activity of envelope proteins in trans-Golgi by binding to envelope protein E at pH6.0. After virion release in extracellular space, gets dissociated from E dimers. Acts as a chaperone for envelope protein E during intracellular virion assembly by masking and inactivating envelope protein E fusion peptide. prM is the only viral peptide matured by host furin in the trans-Golgi network probably to avoid catastrophic activation of the viral fusion activity in acidic Golgi compartment prior to virion release. prM-E cleavage is inefficient, and many virions are only partially matured. These uncleaved prM would play a role in immune evasion. Functionally, may play a role in virus budding. Exerts cytotoxic effects by activating a mitochondrial apoptotic pathway through M ectodomain. May display a viroporin activity. In terms of biological role, binds to host cell surface receptor and mediates fusion between viral and cellular membranes. Envelope protein is synthesized in the endoplasmic reticulum in the form of heterodimer with protein prM. They play a role in virion budding in the ER, and the newly formed immature particle is covered with 60 spikes composed of heterodimer between precursor prM and envelope protein E. The virion is transported to the Golgi apparatus where the low pH causes dissociation of PrM-E heterodimers and formation of E homodimers. prM-E cleavage is inefficient, and many virions are only partially matured. These uncleaved prM would play a role in immune evasion. Its function is as follows. Involved in immune evasion, pathogenesis and viral replication. Once cleaved off the polyprotein, is targeted to three destinations: the viral replication cycle, the plasma membrane and the extracellular compartment. Essential for viral replication. Required for formation of the replication complex and recruitment of other non-structural proteins to the ER-derived membrane structures. Excreted as a hexameric lipoparticle that plays a role against host immune response. Antagonizing the complement function. Binds to the host macrophages and dendritic cells. Inhibits signal transduction originating from Toll-like receptor 3 (TLR3). Disrupts the host endothelial glycocalyx layer of host pulmonary microvascular endothelial cells, inducing degradation of sialic acid and shedding of heparan sulfate proteoglycans. NS1 induces expression of sialidases, heparanase, and activates cathepsin L, which activates heparanase via enzymatic cleavage. These effects are probably linked to the endothelial hyperpermeability observed in severe dengue disease. Functionally, component of the viral RNA replication complex that functions in virion assembly and antagonizes the host immune response. In terms of biological role, required cofactor for the serine protease function of NS3. May have membrane-destabilizing activity and form viroporins. Its function is as follows. Displays three enzymatic activities: serine protease, NTPase and RNA helicase. NS3 serine protease, in association with NS2B, performs its autocleavage and cleaves the polyprotein at dibasic sites in the cytoplasm: C-prM, NS2A-NS2B, NS2B-NS3, NS3-NS4A, NS4A-2K and NS4B-NS5. NS3 RNA helicase binds RNA and unwinds dsRNA in the 3' to 5' direction. Regulates the ATPase activity of the NS3 helicase activity. NS4A allows NS3 helicase to conserve energy during unwinding. Plays a role in the inhibition of the host innate immune response. Interacts with host MAVS and thereby prevents the interaction between RIGI and MAVS. In turn, IFN-beta production is impaired. Interacts with host AUP1 which mediates induction of lipophagy in host cells and facilitates production of virus progeny particles. Functionally, functions as a signal peptide for NS4B and is required for the interferon antagonism activity of the latter. In terms of biological role, induces the formation of ER-derived membrane vesicles where the viral replication takes place. Inhibits interferon (IFN)-induced host STAT1 phosphorylation and nuclear translocation, thereby preventing the establishment of cellular antiviral state by blocking the IFN-alpha/beta pathway. Its function is as follows. Replicates the viral (+) and (-) RNA genome, and performs the capping of genomes in the cytoplasm. NS5 methylates viral RNA cap at guanine N-7 and ribose 2'-O positions. Besides its role in RNA genome replication, also prevents the establishment of cellular antiviral state by blocking the interferon-alpha/beta (IFN-alpha/beta) signaling pathway. Inhibits host TYK2 and STAT2 phosphorylation, thereby preventing activation of JAK-STAT signaling pathway. In Dengue virus type 3 (strain Philippines/H87/1956) (DENV-3), this protein is Genome polyprotein.